The chain runs to 430 residues: DD-carboxypeptidase/endopeptidase Mpg (430 aa).

The Zn(2+) site is built by His-295, Asp-299, and His-375.

The protein belongs to the peptidase M23B family. As to quaternary structure, monomer. Zn(2+) is required as a cofactor. Likely to be synthesized as a proenzyme. The cleavage of the N-terminal domain is probably required for the activation of the enzyme.

Its subcellular location is the cell outer membrane. Its function is as follows. Has both endopeptidase and DD-carboxypeptidase activities. Degrades cell wall peptidoglycan (PG) to allow consummate expression of pili. The sequence is that of DD-carboxypeptidase/endopeptidase Mpg from Neisseria meningitidis serogroup B (strain ATCC 13091 / M2091).